Here is a 469-residue protein sequence, read N- to C-terminus: Adenosylhomocysteinase (469 aa).

Substrate is bound by residues Thr63, Asp139, and Glu164. 165–167 (TTT) contributes to the NAD(+) binding site. Substrate contacts are provided by Lys194 and Asp198. Residues Asn199, 228-233 (GYGDVG), Glu251, Asn300, 321-323 (IGH), and Asn375 each bind NAD(+).

It belongs to the adenosylhomocysteinase family. Requires NAD(+) as cofactor.

It is found in the cytoplasm. It carries out the reaction S-adenosyl-L-homocysteine + H2O = L-homocysteine + adenosine. Its pathway is amino-acid biosynthesis; L-homocysteine biosynthesis; L-homocysteine from S-adenosyl-L-homocysteine: step 1/1. Its function is as follows. May play a key role in the regulation of the intracellular concentration of adenosylhomocysteine. The chain is Adenosylhomocysteinase from Pseudomonas fluorescens (strain SBW25).